Here is a 453-residue protein sequence, read N- to C-terminus: Serine--tRNA ligase (453 aa).

249–251 (TSE) is a binding site for L-serine. ATP is bound by residues 280–282 (RKE) and Val-296. Glu-303 contacts L-serine. Position 367–370 (367–370 (EMVS)) interacts with ATP. Thr-404 provides a ligand contact to L-serine.

The protein belongs to the class-II aminoacyl-tRNA synthetase family. Type-1 seryl-tRNA synthetase subfamily. In terms of assembly, homodimer. The tRNA molecule binds across the dimer.

It is found in the cytoplasm. The catalysed reaction is tRNA(Ser) + L-serine + ATP = L-seryl-tRNA(Ser) + AMP + diphosphate + H(+). It catalyses the reaction tRNA(Sec) + L-serine + ATP = L-seryl-tRNA(Sec) + AMP + diphosphate + H(+). It participates in aminoacyl-tRNA biosynthesis; selenocysteinyl-tRNA(Sec) biosynthesis; L-seryl-tRNA(Sec) from L-serine and tRNA(Sec): step 1/1. Its function is as follows. Catalyzes the attachment of serine to tRNA(Ser). Is also able to aminoacylate tRNA(Sec) with serine, to form the misacylated tRNA L-seryl-tRNA(Sec), which will be further converted into selenocysteinyl-tRNA(Sec). This is Serine--tRNA ligase from Archaeoglobus fulgidus (strain ATCC 49558 / DSM 4304 / JCM 9628 / NBRC 100126 / VC-16).